We begin with the raw amino-acid sequence, 194 residues long: Imidazoleglycerol-phosphate dehydratase (194 aa).

The protein belongs to the imidazoleglycerol-phosphate dehydratase family.

It is found in the cytoplasm. The catalysed reaction is D-erythro-1-(imidazol-4-yl)glycerol 3-phosphate = 3-(imidazol-4-yl)-2-oxopropyl phosphate + H2O. The protein operates within amino-acid biosynthesis; L-histidine biosynthesis; L-histidine from 5-phospho-alpha-D-ribose 1-diphosphate: step 6/9. This chain is Imidazoleglycerol-phosphate dehydratase, found in Bacillus cereus (strain B4264).